A 380-amino-acid polypeptide reads, in one-letter code: Chaperone protein DnaJ (380 aa).

In terms of domain architecture, J spans 5–69 (DYYEILGVSK…QKRAHYDQFG (65 aa)). The CR-type zinc finger occupies 135-217 (GKETDIEIPS…CGGTGRVKRR (83 aa)). Zn(2+) contacts are provided by cysteine 148, cysteine 151, cysteine 165, cysteine 168, cysteine 191, cysteine 194, cysteine 205, and cysteine 208. 4 CXXCXGXG motif repeats span residues 148–155 (CNTCHGTG), 165–172 (CPHCHGAG), 191–198 (CPYCGGTG), and 205–212 (CTTCGGTG).

Belongs to the DnaJ family. As to quaternary structure, homodimer. Zn(2+) is required as a cofactor.

Its subcellular location is the cytoplasm. Functionally, participates actively in the response to hyperosmotic and heat shock by preventing the aggregation of stress-denatured proteins and by disaggregating proteins, also in an autonomous, DnaK-independent fashion. Unfolded proteins bind initially to DnaJ; upon interaction with the DnaJ-bound protein, DnaK hydrolyzes its bound ATP, resulting in the formation of a stable complex. GrpE releases ADP from DnaK; ATP binding to DnaK triggers the release of the substrate protein, thus completing the reaction cycle. Several rounds of ATP-dependent interactions between DnaJ, DnaK and GrpE are required for fully efficient folding. Also involved, together with DnaK and GrpE, in the DNA replication of plasmids through activation of initiation proteins. The polypeptide is Chaperone protein DnaJ (Geobacillus stearothermophilus (Bacillus stearothermophilus)).